The sequence spans 304 residues: Putative AraC-like transcription regulator (304 aa).

The region spanning 202–300 (ATALTCLHRD…GMPPGDYRKH (99 aa)) is the HTH araC/xylS-type domain. 2 consecutive DNA-binding regions (H-T-H motif) follow at residues 219-240 (ADLADTAAVSRSTLAARFKATV) and 267-290 (LASIAHSVGYGSESALSVAFKRVL).

The polypeptide is Putative AraC-like transcription regulator (Streptomyces lividans).